We begin with the raw amino-acid sequence, 337 residues long: Formamidase (337 aa).

The region spanning 14 to 257 (VVIGLVQLQL…DEIITAEVRP (244 aa)) is the CN hydrolase domain. Residue glutamate 60 is the Proton acceptor of the active site. The active-site Proton donor is lysine 129. Catalysis depends on cysteine 162, which acts as the Nucleophile.

It belongs to the carbon-nitrogen hydrolase superfamily. Aliphatic amidase family.

The catalysed reaction is formamide + H2O = formate + NH4(+). Its function is as follows. Is an aliphatic amidase with a restricted substrate specificity, as it only hydrolyzes formamide. In Bradyrhizobium diazoefficiens (strain JCM 10833 / BCRC 13528 / IAM 13628 / NBRC 14792 / USDA 110), this protein is Formamidase.